Consider the following 271-residue polypeptide: Probable redox regulatory protein SCO3349 (271 aa).

Disordered regions lie at residues 1 to 21 (MPKT…KHIA) and 109 to 130 (AEGT…TRPF). Residues 7–21 (AKDEKSAKKDKKHIA) are compositionally biased toward basic and acidic residues.

The protein belongs to the Rv0495c family.

Essential for maintaining intracellular redox homeostasis. The protein is Probable redox regulatory protein SCO3349 of Streptomyces coelicolor (strain ATCC BAA-471 / A3(2) / M145).